A 1123-amino-acid polypeptide reads, in one-letter code: Mediator of RNA polymerase II transcription subunit 14 (1123 aa).

The tract at residues 450 to 484 is disordered; sequence KQSDASDEQQNNIEPNEESLEDLREDNNEDESEPQ.

This sequence belongs to the Mediator complex subunit 14 family. In terms of assembly, component of the Mediator complex.

It localises to the nucleus. Functionally, component of the Mediator complex, a coactivator involved in the regulated transcription of nearly all RNA polymerase II-dependent genes. Mediator functions as a bridge to convey information from gene-specific regulatory proteins to the basal RNA polymerase II transcription machinery. Mediator is recruited to promoters by direct interactions with regulatory proteins and serves as a scaffold for the assembly of a functional preinitiation complex with RNA polymerase II and the general transcription factors. The protein is Mediator of RNA polymerase II transcription subunit 14 (RGR1) of Debaryomyces hansenii (strain ATCC 36239 / CBS 767 / BCRC 21394 / JCM 1990 / NBRC 0083 / IGC 2968) (Yeast).